The chain runs to 1328 residues: Protein turtle homolog B (1328 aa).

Positions 1-20 are cleaved as a signal peptide; it reads MIWYVATLIASVISTRGLVA. At 21 to 722 the chain is on the extracellular side; the sequence is QVAHGLREEP…DLTDDGLARP (702 aa). 5 Ig-like domains span residues 30 to 115, 139 to 226, 228 to 320, 324 to 415, and 420 to 504; these read PEFV…ECKV, PTFT…LLVQ, PPFI…AYLT, PARV…ARLV, and PYFT…THLT. Cystine bridges form between cysteine 45/cysteine 113 and cysteine 161/cysteine 208. N-linked (GlcNAc...) asparagine glycans are attached at residues asparagine 241 and asparagine 258. 3 disulfide bridges follow: cysteine 250–cysteine 303, cysteine 346–cysteine 397, and cysteine 442–cysteine 488. 2 Fibronectin type-III domains span residues 512–604 and 614–708; these read APGS…TLAF and LVTP…STDI. N-linked (GlcNAc...) asparagine glycosylation occurs at asparagine 624. The helical transmembrane segment at 723–743 threads the bilayer; sequence VLAGIVATICFLAAAILFSTL. The Cytoplasmic portion of the chain corresponds to 744–1328; that stretch reads AACFVNKQRK…EPPTTLPTSG (585 aa). 3 disordered regions span residues 758-817, 914-1040, and 1107-1328; these read RKKD…EKEL, PMSS…PEPW, and SPGR…PTSG. A phosphoserine mark is found at serine 775, serine 783, and serine 794. A compositionally biased stretch (low complexity) spans 990-1001; sequence SPLSSVMSSPPL. 3 stretches are compositionally biased toward polar residues: residues 1018–1033, 1129–1141, and 1199–1214; these read ENAS…TPTG, LVSQ…TSQG, and SRLS…SRTG. Arginine 1136 is subject to Omega-N-methylarginine. A phosphoserine mark is found at serine 1207 and serine 1215. The span at 1246-1273 shows a compositional bias: low complexity; it reads SFSRKSTPSSTGSPSQSSRSGSPSYRPT. Composition is skewed to pro residues over residues 1284–1295 and 1318–1328; these read PSPPPGPAPPAP and PEPPTTLPTSG.

This sequence belongs to the immunoglobulin superfamily. Turtle family. In terms of assembly, found in a complex with MAGI2 and NLGN2, where it interacts with MAGI2 (via PDZ 5 and PDZ 6 domains). In terms of processing, N-glycosylated and sialylated. Not significantly O-glycosylated. In terms of tissue distribution, detected primarily in brain, including cortex, hippocampus, cerebellum and striatum. Largely restricted to inhibitory GABAergic interneurons (at protein level).

Its subcellular location is the postsynaptic cell membrane. The protein resides in the postsynaptic density. Transmembrane protein which is abundantly expressed in interneurons, where it may regulate inhibitory synapse development. May mediate homophilic cell adhesion. The polypeptide is Protein turtle homolog B (Rattus norvegicus (Rat)).